The primary structure comprises 159 residues: Protein SPA, chloroplastic (159 aa).

The transit peptide at 1–47 (MLTAPSLSRFKSPFISSPLKLPTLSSSFFTQKFHQTCRRRNSYPCIK) directs the protein to the chloroplast. The chain crosses the membrane as a helical span at residues 56–76 (VIAITVGVLSVAIGVGIPVFY). The segment at 85–145 (KRENTQPCFP…TCTTCQGSGI (61 aa)) is CR-type-like. CXXCXGXG motif repeat units lie at residues 92–99 (CFPCTGTG), 103–110 (CRFCMGTG), 126–133 (CINCDGAG), and 137–144 (CTTCQGSG).

In terms of tissue distribution, expressed in source leaves. Lower levels of expression in fruits and stems.

The protein localises to the plastid. It localises to the chloroplast thylakoid membrane. Its function is as follows. Participates in determining harvest index (HI) by affecting source-sink carbon distribution. Up-regulates the conversion of fixed carbon to exportable sugars. This is Protein SPA, chloroplastic from Solanum lycopersicum (Tomato).